The sequence spans 306 residues: Aspartate carbamoyltransferase catalytic subunit (306 aa).

Carbamoyl phosphate contacts are provided by Arg55 and Thr56. Lys85 serves as a coordination point for L-aspartate. Carbamoyl phosphate contacts are provided by Arg106, His133, and Gln136. L-aspartate-binding residues include Arg166 and Arg228. Carbamoyl phosphate is bound by residues Leu264 and Pro265.

This sequence belongs to the aspartate/ornithine carbamoyltransferase superfamily. ATCase family. As to quaternary structure, heterododecamer (2C3:3R2) of six catalytic PyrB chains organized as two trimers (C3), and six regulatory PyrI chains organized as three dimers (R2).

It carries out the reaction carbamoyl phosphate + L-aspartate = N-carbamoyl-L-aspartate + phosphate + H(+). Its pathway is pyrimidine metabolism; UMP biosynthesis via de novo pathway; (S)-dihydroorotate from bicarbonate: step 2/3. Functionally, catalyzes the condensation of carbamoyl phosphate and aspartate to form carbamoyl aspartate and inorganic phosphate, the committed step in the de novo pyrimidine nucleotide biosynthesis pathway. The polypeptide is Aspartate carbamoyltransferase catalytic subunit (Serratia marcescens).